The following is a 31-amino-acid chain: Conotoxin pc6d (31 aa).

Disulfide bonds link Cys-2/Cys-20, Cys-9/Cys-25, and Cys-19/Cys-29.

The protein belongs to the conotoxin O1 superfamily. Expressed by the venom duct.

The protein resides in the secreted. This chain is Conotoxin pc6d, found in Conus pictus (Cone snail).